Here is a 434-residue protein sequence, read N- to C-terminus: Serine hydroxymethyltransferase (434 aa).

(6S)-5,6,7,8-tetrahydrofolate-binding positions include leucine 124 and 128 to 130 (GHL). The residue at position 233 (lysine 233) is an N6-(pyridoxal phosphate)lysine. Glutamate 249 is a (6S)-5,6,7,8-tetrahydrofolate binding site.

This sequence belongs to the SHMT family. In terms of assembly, homodimer. Pyridoxal 5'-phosphate is required as a cofactor.

Its subcellular location is the cytoplasm. It carries out the reaction (6R)-5,10-methylene-5,6,7,8-tetrahydrofolate + glycine + H2O = (6S)-5,6,7,8-tetrahydrofolate + L-serine. The protein operates within one-carbon metabolism; tetrahydrofolate interconversion. Its pathway is amino-acid biosynthesis; glycine biosynthesis; glycine from L-serine: step 1/1. Functionally, catalyzes the reversible interconversion of serine and glycine with tetrahydrofolate (THF) serving as the one-carbon carrier. This reaction serves as the major source of one-carbon groups required for the biosynthesis of purines, thymidylate, methionine, and other important biomolecules. Also exhibits THF-independent aldolase activity toward beta-hydroxyamino acids, producing glycine and aldehydes, via a retro-aldol mechanism. This is Serine hydroxymethyltransferase from Synechococcus sp. (strain JA-3-3Ab) (Cyanobacteria bacterium Yellowstone A-Prime).